The chain runs to 501 residues: Cytochrome P450 71B25 (501 aa).

Residues 1–21 (MAILQSFLLLLSLPFLFTLIY) traverse the membrane as a helical segment. Heme is bound at residue cysteine 445.

This sequence belongs to the cytochrome P450 family. The cofactor is heme.

It is found in the membrane. This is Cytochrome P450 71B25 (CYP71B25) from Arabidopsis thaliana (Mouse-ear cress).